We begin with the raw amino-acid sequence, 297 residues long: tRNA pseudouridine synthase B (297 aa).

The active-site Nucleophile is the aspartate 39.

It belongs to the pseudouridine synthase TruB family. Type 1 subfamily.

It catalyses the reaction uridine(55) in tRNA = pseudouridine(55) in tRNA. In terms of biological role, responsible for synthesis of pseudouridine from uracil-55 in the psi GC loop of transfer RNAs. The sequence is that of tRNA pseudouridine synthase B from Lactobacillus johnsonii (strain CNCM I-12250 / La1 / NCC 533).